The primary structure comprises 212 residues: Methylthioribulose-1-phosphate dehydratase (212 aa).

2 residues coordinate Zn(2+): H99 and H101.

The protein belongs to the aldolase class II family. MtnB subfamily. In terms of assembly, homotetramer. The cofactor is Zn(2+).

The enzyme catalyses 5-(methylsulfanyl)-D-ribulose 1-phosphate = 5-methylsulfanyl-2,3-dioxopentyl phosphate + H2O. It participates in amino-acid biosynthesis; L-methionine biosynthesis via salvage pathway; L-methionine from S-methyl-5-thio-alpha-D-ribose 1-phosphate: step 2/6. Catalyzes the dehydration of methylthioribulose-1-phosphate (MTRu-1-P) into 2,3-diketo-5-methylthiopentyl-1-phosphate (DK-MTP-1-P). The polypeptide is Methylthioribulose-1-phosphate dehydratase (Bacillus pumilus (strain SAFR-032)).